A 366-amino-acid polypeptide reads, in one-letter code: MASNGMASSPSSFFPPNFLLHMAQQQAAPPHDPQEHHHHHHHGHHGHHHEQQQQQQHHHHLGPPPPPPPHPHNPFLPSSAQCPSLQEFRGMAPMLGKRPMSYGDGGGGGDEVNGGGEDELSDDGSQAGEKKRRLNVEQVRTLEKNFELGNKLEPERKMQLARALGLQPRQVAIWFQNRRARWKTKQLEKDYDALKRQLDAVKAENDALLNHNKKLQAEIVALKGREAASELINLNKETEASCSNRSENSSEINLDISRTPPPDAAALDTAPTAHHHHHGGGGGGGGGGGMIPFYTSIARPASGGGVDIDQLLHSSSGGAGGPKMEHHGGGGNVQAASVDTASFGNLLCGVDEPPPFWPWPDHQHFH.

Disordered regions lie at residues 25–81 (QQAA…SSAQ) and 94–132 (MLGK…EKKR). Basic residues predominate over residues 36 to 48 (HHHHHHHGHHGHH). The span at 62 to 74 (GPPPPPPPHPHNP) shows a compositional bias: pro residues. The segment covering 103–115 (GDGGGGGDEVNGG) has biased composition (gly residues). The segment at residues 127–186 (AGEKKRRLNVEQVRTLEKNFELGNKLEPERKMQLARALGLQPRQVAIWFQNRRARWKTKQ) is a DNA-binding region (homeobox). The tract at residues 185–229 (KQLEKDYDALKRQLDAVKAENDALLNHNKKLQAEIVALKGREAAS) is leucine-zipper. Disordered regions lie at residues 239–287 (EASC…GGGG) and 312–336 (LHSS…VQAA). The span at 240–252 (ASCSNRSENSSEI) shows a compositional bias: polar residues.

This sequence belongs to the HD-ZIP homeobox family. Class I subfamily. In terms of tissue distribution, expressed in seedlings, roots, stems, leaf blades and panicles.

The protein resides in the nucleus. In terms of biological role, probable transcription factor. This chain is Homeobox-leucine zipper protein HOX21 (HOX21), found in Oryza sativa subsp. japonica (Rice).